Here is a 492-residue protein sequence, read N- to C-terminus: Cysteine--tRNA ligase (492 aa).

Cys-35 serves as a coordination point for Zn(2+). Residues 37–47 carry the 'HIGH' region motif; sequence PTVYSNVHLGN. Residues Cys-230, His-255, and Glu-259 each coordinate Zn(2+). The 'KMSKS' region motif lies at 287 to 291; it reads KMAKS. Lys-290 is a binding site for ATP.

This sequence belongs to the class-I aminoacyl-tRNA synthetase family. In terms of assembly, monomer. Requires Zn(2+) as cofactor.

Its subcellular location is the cytoplasm. The enzyme catalyses tRNA(Cys) + L-cysteine + ATP = L-cysteinyl-tRNA(Cys) + AMP + diphosphate. In Flavobacterium johnsoniae (strain ATCC 17061 / DSM 2064 / JCM 8514 / BCRC 14874 / CCUG 350202 / NBRC 14942 / NCIMB 11054 / UW101) (Cytophaga johnsonae), this protein is Cysteine--tRNA ligase.